The following is a 206-amino-acid chain: Small ribosomal subunit protein uS4 (206 aa).

In terms of domain architecture, S4 RNA-binding spans 96–156 (CRLDNVVYRM…EKSLNQLRIV (61 aa)).

The protein belongs to the universal ribosomal protein uS4 family. Part of the 30S ribosomal subunit. Contacts protein S5. The interaction surface between S4 and S5 is involved in control of translational fidelity.

Functionally, one of the primary rRNA binding proteins, it binds directly to 16S rRNA where it nucleates assembly of the body of the 30S subunit. Its function is as follows. With S5 and S12 plays an important role in translational accuracy. The polypeptide is Small ribosomal subunit protein uS4 (Pseudomonas entomophila (strain L48)).